The chain runs to 398 residues: Peptidyl-prolyl cis-trans isomerase D (398 aa).

The 165-residue stretch at F21 to E185 folds into the PPIase cyclophilin-type domain. 3 TPR repeats span residues G229–H262, T282–E323, and A335–D368.

Belongs to the cyclophilin-type PPIase family. PPIase D subfamily.

The protein localises to the cytoplasm. It carries out the reaction [protein]-peptidylproline (omega=180) = [protein]-peptidylproline (omega=0). Its function is as follows. PPIases accelerate the folding of proteins. It catalyzes the cis-trans isomerization of proline imidic peptide bonds in oligopeptides. The protein is Peptidyl-prolyl cis-trans isomerase D (CPR6) of Mycosarcoma maydis (Corn smut fungus).